A 364-amino-acid polypeptide reads, in one-letter code: N-acetyl-gamma-glutamyl-phosphate reductase (364 aa).

Cysteine 157 is a catalytic residue.

This sequence belongs to the NAGSA dehydrogenase family. Type 1 subfamily.

Its subcellular location is the cytoplasm. It carries out the reaction N-acetyl-L-glutamate 5-semialdehyde + phosphate + NADP(+) = N-acetyl-L-glutamyl 5-phosphate + NADPH + H(+). It participates in amino-acid biosynthesis; L-arginine biosynthesis; N(2)-acetyl-L-ornithine from L-glutamate: step 3/4. In terms of biological role, catalyzes the NADPH-dependent reduction of N-acetyl-5-glutamyl phosphate to yield N-acetyl-L-glutamate 5-semialdehyde. The sequence is that of N-acetyl-gamma-glutamyl-phosphate reductase from Bifidobacterium longum (strain NCC 2705).